A 300-amino-acid chain; its full sequence is Ribosomal protein L11 methyltransferase (300 aa).

Residues Thr152, Gly173, Asp195, and Asn234 each coordinate S-adenosyl-L-methionine.

This sequence belongs to the methyltransferase superfamily. PrmA family.

Its subcellular location is the cytoplasm. The enzyme catalyses L-lysyl-[protein] + 3 S-adenosyl-L-methionine = N(6),N(6),N(6)-trimethyl-L-lysyl-[protein] + 3 S-adenosyl-L-homocysteine + 3 H(+). Methylates ribosomal protein L11. This chain is Ribosomal protein L11 methyltransferase, found in Burkholderia lata (strain ATCC 17760 / DSM 23089 / LMG 22485 / NCIMB 9086 / R18194 / 383).